We begin with the raw amino-acid sequence, 122 residues long: Acidic phospholipase A2 (122 aa).

Cystine bridges form between C26–C115, C28–C44, C43–C95, C49–C122, C50–C88, C57–C81, and C75–C86. The Ca(2+) site is built by Y27, G29, and G31. H47 is an active-site residue. A Ca(2+)-binding site is contributed by D48. D89 is an active-site residue.

As to quaternary structure, may form tetramers. Requires Ca(2+) as cofactor. As to expression, expressed by the venom gland.

Its subcellular location is the secreted. The catalysed reaction is a 1,2-diacyl-sn-glycero-3-phosphocholine + H2O = a 1-acyl-sn-glycero-3-phosphocholine + a fatty acid + H(+). Its function is as follows. PLA2 catalyzes the calcium-dependent hydrolysis of the 2-acyl groups in 3-sn-phosphoglycerides. In vivo, is non-lethal to mice when intravenously injected up to a concentration of 30 ug, however does show significant edematogenic activity at the injection site. The protein is Acidic phospholipase A2 of Lachesis acrochorda (Chocoan bushmaster).